The sequence spans 207 residues: FMN-dependent NADH:quinone oxidoreductase 2 (207 aa).

FMN is bound by residues Ser10, 16-18 (SIS), 96-99 (MYNL), and 141-144 (SRGG).

This sequence belongs to the azoreductase type 1 family. In terms of assembly, homodimer. Requires FMN as cofactor.

The enzyme catalyses 2 a quinone + NADH + H(+) = 2 a 1,4-benzosemiquinone + NAD(+). It carries out the reaction N,N-dimethyl-1,4-phenylenediamine + anthranilate + 2 NAD(+) = 2-(4-dimethylaminophenyl)diazenylbenzoate + 2 NADH + 2 H(+). Functionally, quinone reductase that provides resistance to thiol-specific stress caused by electrophilic quinones. In terms of biological role, also exhibits azoreductase activity. Catalyzes the reductive cleavage of the azo bond in aromatic azo compounds to the corresponding amines. This is FMN-dependent NADH:quinone oxidoreductase 2 from Trichormus variabilis (strain ATCC 29413 / PCC 7937) (Anabaena variabilis).